The primary structure comprises 66 residues: Large ribosomal subunit protein uL29 (66 aa).

The protein belongs to the universal ribosomal protein uL29 family.

The sequence is that of Large ribosomal subunit protein uL29 from Bartonella quintana (strain Toulouse) (Rochalimaea quintana).